Here is a 314-residue protein sequence, read N- to C-terminus: UPF0761 membrane protein VIBHAR_00593 (314 aa).

6 helical membrane passes run 41 to 61 (YLAY…LSIL), 104 to 124 (MTAV…SNID), 143 to 163 (FSMY…SIAV), 185 to 205 (FLRW…YFLV), 217 to 237 (IGAA…AFYI), and 249 to 269 (ALAA…IVLI).

This sequence belongs to the UPF0761 family.

It is found in the cell inner membrane. In Vibrio campbellii (strain ATCC BAA-1116), this protein is UPF0761 membrane protein VIBHAR_00593.